Reading from the N-terminus, the 643-residue chain is MFGIVYLKNRSLLCKNPFSSYPRYGFMPSFDTQFSNQFRKLEINIGRKRYSSKTLNTKYTDQPEGPIYPLDVLRLDISKALHDISGIDHSLILNALESTNSMDRGDLLLPLPKIKVADPVAVANRWAIELSTHGCIGKVCAKGPFLQFFLDQRYLIQSTVPNILLQKGKYGQKKSRHQKKVVVEFSSPNIAKPFHAGHLRSTIIGGFLSNLYEAMGWSVTRMNYLGDWGRQFGLLAVGFKRYGDEKTLQKQPIQHLFDVYVKINMDLAKEEINGNSKCGISGEARSFFKNLENGDENAIKIWNRFRSLSIHHYIQTYSRLNINFDIFSGESQVSKESMNEALDIFRKNNLVKEIDGALVIDLTQWSKRLGRVVVQKSDGTTLYLTRDVGAAIERKKNLHFDKMVYVISSQQDLYMSQFFMILKKMNFEWAKDLQHINFGMVQGMSTRKGNVVFLDTILDEARDKALQIMENNKMKISQVDNPQRVADLIGVSAIIIQDMKSKRINNYEFNWNRMLSFEGDTGPYLQYTHSRLRSLERTSSDFTTDMLIHADFSNLNEPQLVELVRLLAQYPDVLRRAFETQEPATIVTYLFKVCHQVSSCYKKIWVSGKPADIAIPRLAVYSASRQVLHNAMSLLGLVPVDRM.

The short motif at 188–198 (PNIAKPFHAGH) is the 'HIGH' region element.

The protein belongs to the class-I aminoacyl-tRNA synthetase family.

It is found in the mitochondrion matrix. It catalyses the reaction tRNA(Arg) + L-arginine + ATP = L-arginyl-tRNA(Arg) + AMP + diphosphate. This is Arginine--tRNA ligase, mitochondrial (MSR1) from Saccharomyces cerevisiae (strain ATCC 204508 / S288c) (Baker's yeast).